A 161-amino-acid chain; its full sequence is Phosphopantetheine adenylyltransferase (161 aa).

Substrate is bound at residue S11. Residues 11-12 (SF) and H19 each bind ATP. K43, L75, and R89 together coordinate substrate. ATP is bound by residues 90–92 (GLR), E100, and 125–131 (YSYLSSS).

The protein belongs to the bacterial CoaD family. In terms of assembly, homohexamer. Requires Mg(2+) as cofactor.

Its subcellular location is the cytoplasm. It carries out the reaction (R)-4'-phosphopantetheine + ATP + H(+) = 3'-dephospho-CoA + diphosphate. It participates in cofactor biosynthesis; coenzyme A biosynthesis; CoA from (R)-pantothenate: step 4/5. In terms of biological role, reversibly transfers an adenylyl group from ATP to 4'-phosphopantetheine, yielding dephospho-CoA (dPCoA) and pyrophosphate. The polypeptide is Phosphopantetheine adenylyltransferase (Citrifermentans bemidjiense (strain ATCC BAA-1014 / DSM 16622 / JCM 12645 / Bem) (Geobacter bemidjiensis)).